The sequence spans 450 residues: Keratin, type I cytoskeletal 25 (450 aa).

A compositionally biased stretch (low complexity) spans 1-11; sequence MSLRLSSASRR. Residues 1-20 form a disordered region; it reads MSLRLSSASRRSCPRPTTGS. Residues 1–78 are head; sequence MSLRLSSASR…VNERGLLSGN (78 aa). The coil 1A stretch occupies residues 79 to 114; sequence EKVTMQNLNDRLASYLDSVHALEEANADLEQKIKGW. The 316-residue stretch at 79-394 folds into the IF rod domain; the sequence is EKVTMQNLND…LLIGGDDGAC (316 aa). The interval 115-136 is linker 1; that stretch reads YEKFGPGSCRGLDHDYSRYFPI. Residues 137–228 form a coil 1B region; sequence IDDLKNQIIA…KNHKEEMQVL (92 aa). The tract at residues 229–251 is linker 12; sequence QCAAGGNVNVEMNAAPGVDLTVL. Residues 252 to 390 are coil 2; the sequence is LNNMRAEYEA…ETYCLLIGGD (139 aa). The interval 391 to 450 is tail; that stretch reads DGACKSGGYKSKDYGSGNVGSQVKDPAKAIVVKKVLEEVDQRSKILTTRLHSLEEKSQSN. Position 442 is a phosphoserine (S442).

The protein belongs to the intermediate filament family. Heterodimer of a type I and a type II keratin. Heterodimer with type II keratin KRT5 leading to the formation of keratin intermediate filament (KIF) network. Interacts with KRT6A to form filaments. In terms of tissue distribution, strongly expressed in skin and scalp, and weak expression observed in thymus and tongue. In the hair follicle, expressed in Henle layer, Huxley layer and in the inner root sheath cuticle of the hair follicle. Expression extends from the bulb region up to the point of differentiation into the three layers. Also present in the medulla of beard hair (at protein level).

The protein resides in the cytoplasm. Functionally, essential for the proper assembly of type I and type II keratin protein complexes and formation of keratin intermediate filaments in the inner root sheath (irs). Plays a role in the cytoskeleton organization. The protein is Keratin, type I cytoskeletal 25 of Homo sapiens (Human).